The following is a 26-amino-acid chain: L-amino-acid oxidase (26 aa).

The protein belongs to the flavin monoamine oxidase family. As to quaternary structure, monomer. FAD serves as cofactor. Post-translationally, not glycosylated. In terms of tissue distribution, expressed by the ink gland.

The protein localises to the secreted. It carries out the reaction an L-alpha-amino acid + O2 + H2O = a 2-oxocarboxylate + H2O2 + NH4(+). In terms of biological role, catalyzes the oxidative deamination of positively charged L-amino acids L-Lys and L-Arg but not of amino acids L-His, L-Asp or L-Glu. Has antibacterial activity against the Gram-positive bacterium S.aureus (MIC=15 ug/ml). This antibacterial activity is bacteriostatic in the absence of amino acids L-Lys or L-Arg but bactericidal in their presence. The antibacterial effect is largely dependent on H(2)O(2) produced in the oxidative deamination of substrates. Has hemagglutinating activity towards rabbit erythrocytes. Hemagglutinating activity is inhibited by the glycoprotein fetuin, but not by glucose, mannose, galactose, N-acetylglucosamine, N-acetylgalactosamine or sialic acid. The chain is L-amino-acid oxidase from Aplysia dactylomela (Spotted sea hare).